The primary structure comprises 600 residues: DNA mismatch repair protein MutL (600 aa).

This sequence belongs to the DNA mismatch repair MutL/HexB family.

In terms of biological role, this protein is involved in the repair of mismatches in DNA. It is required for dam-dependent methyl-directed DNA mismatch repair. May act as a 'molecular matchmaker', a protein that promotes the formation of a stable complex between two or more DNA-binding proteins in an ATP-dependent manner without itself being part of a final effector complex. The sequence is that of DNA mismatch repair protein MutL from Sinorhizobium fredii (strain NBRC 101917 / NGR234).